We begin with the raw amino-acid sequence, 93 residues long: Small ribosomal subunit protein uS19 (93 aa).

The protein belongs to the universal ribosomal protein uS19 family.

Its function is as follows. Protein S19 forms a complex with S13 that binds strongly to the 16S ribosomal RNA. In Desulfitobacterium hafniense (strain Y51), this protein is Small ribosomal subunit protein uS19.